Consider the following 427-residue polypeptide: Homeotic protein caudal (427 aa).

The tract at residues 104 to 273 (QLMQQHHHHH…QPQPGKTRTK (170 aa)) is disordered. Over residues 116-129 (ASSSSASSGSSSSG) the composition is skewed to low complexity. The span at 145–164 (GVGGAGGGGGVGGATDGGPG) shows a compositional bias: gly residues. Residues 183 to 195 (ITVSGSEISSPGA) show a composition bias toward polar residues. Residues 209–243 (HLSAVANNNNNNNNNNNSPSTHNNNNNNNSVSNNN) are compositionally biased toward low complexity. Position 245 is a phosphothreonine (Thr-245). The Antp-type hexapeptide signature appears at 252–257 (YFDWMK). Residues 273 to 332 (KDKYRVVYTDFQRLELEKEYCTSRYITIRRKSELAQTLSLSERQVKIWFQNRRAKERKQN) constitute a DNA-binding region (homeobox).

It belongs to the Caudal homeobox family. As to expression, maternally localized in an anteroposterior gradient in the syncytial blastoderm. Also expressed in the pole cells. Zygotically localized in the primordia of the terminal abdominal segment, the hindgut and in the posterior midgut rudiment. Expressed in the gut, the gonads and parts of the genital disks of third instar larvae (at protein level).

Its subcellular location is the nucleus. Its function is as follows. Caudal (cad) is one of a number of transcription factors controlling segmentation of the embryo. Further transcriptional regulation via a 5' flanking region containing DNA replication-related elements (DRE) and by dref also regulated by trh and tgo via the CNS midline element. Alongside Bicoid (bcd), caudal forms concentration gradients down the anterior-posterior (A-P) axis providing positional information and subsequent induction of the gap genes. Plays a role in gastrulation/germ band extension, hindgut morphogenesis, positive regulation of cell proliferation, genital disk development and pattern formation. Acts as a key regulator of the Hox gene network and activates transcription via the downstream core promoter element (DPE) relative to the TATA box. Plays a role in the establishment of the hindgut and in the invagination of the hindgut primordium during gastrulation. These effects on the gut are achieved by acting combinatorially at the posterior of the embryo to activate transcription of different targets including fog, fkh and wg. Caudal is involved in regulation of proliferation through transactivation of the E2F gene. Postembryonically its function is mostly restricted to the intestine where it regulates antimicrobial peptide (AMP) levels preserving the normal gut flora. The sequence is that of Homeotic protein caudal (cad) from Drosophila melanogaster (Fruit fly).